A 641-amino-acid polypeptide reads, in one-letter code: NADH-ubiquinone oxidoreductase chain 5 (641 aa).

17 helical membrane passes run 1 to 21 (MYLT…VIGR), 33 to 53 (SLSI…IVLL), 59 to 79 (ITIY…WAFY), 83 to 103 (ISIT…LYSI), 121 to 141 (LFTF…MFVG), 175 to 195 (VGDL…GSSD), 211 to 231 (ITIV…QLGL), 243 to 263 (TPVS…YLIL), 276 to 296 (LICV…TGLF), 303 to 322 (VIAY…LGLS), 367 to 387 (ILPF…ALPF), 405 to 425 (FLVT…ITAF), 453 to 473 (PLIM…IGYI), 476 to 496 (KHLS…VGTL), 512 to 532 (FGVQ…ALIV), 564 to 584 (WFDN…GGIF), and 621 to 641 (IPHY…SIFI).

Belongs to the complex I subunit 5 family.

The protein resides in the mitochondrion inner membrane. The catalysed reaction is a ubiquinone + NADH + 5 H(+)(in) = a ubiquinol + NAD(+) + 4 H(+)(out). Core subunit of the mitochondrial membrane respiratory chain NADH dehydrogenase (Complex I) that is believed to belong to the minimal assembly required for catalysis. Complex I functions in the transfer of electrons from NADH to the respiratory chain. The immediate electron acceptor for the enzyme is believed to be ubiquinone. This chain is NADH-ubiquinone oxidoreductase chain 5 (ND5), found in Allomyces macrogynus.